A 483-amino-acid polypeptide reads, in one-letter code: Regulatory protein ViaA (483 aa).

The protein belongs to the ViaA family. Homodimer. Interacts with RavA.

The protein localises to the cytoplasm. Its function is as follows. Component of the RavA-ViaA chaperone complex, which may act on the membrane to optimize the function of some of the respiratory chains. ViaA stimulates the ATPase activity of RavA. The protein is Regulatory protein ViaA of Salmonella arizonae (strain ATCC BAA-731 / CDC346-86 / RSK2980).